We begin with the raw amino-acid sequence, 132 residues long: Cytochrome c' (132 aa).

Residues Arg-10, Gln-11, Asp-65, Cys-122, Cys-125, and His-126 each coordinate heme c.

Binds 1 heme c group covalently per subunit.

In terms of biological role, cytochrome c' is the most widely occurring bacterial c-type cytochrome. Cytochromes c' are high-spin proteins and the heme has no sixth ligand. Their exact function is not known. The polypeptide is Cytochrome c' (Halomonas halodenitrificans (strain ATCC 12084 / NCIMB 8669) (Paracoccus halodenitrificans)).